The sequence spans 304 residues: Aspartate carbamoyltransferase catalytic subunit (304 aa).

Carbamoyl phosphate contacts are provided by Arg-49 and Thr-50. Lys-77 is an L-aspartate binding site. Residues Arg-99, His-127, and Gln-130 each contribute to the carbamoyl phosphate site. Arg-160 and Arg-211 together coordinate L-aspartate. Residues Ala-252 and Pro-253 each coordinate carbamoyl phosphate.

It belongs to the aspartate/ornithine carbamoyltransferase superfamily. ATCase family. As to quaternary structure, heterododecamer (2C3:3R2) of six catalytic PyrB chains organized as two trimers (C3), and six regulatory PyrI chains organized as three dimers (R2).

The enzyme catalyses carbamoyl phosphate + L-aspartate = N-carbamoyl-L-aspartate + phosphate + H(+). It participates in pyrimidine metabolism; UMP biosynthesis via de novo pathway; (S)-dihydroorotate from bicarbonate: step 2/3. Its function is as follows. Catalyzes the condensation of carbamoyl phosphate and aspartate to form carbamoyl aspartate and inorganic phosphate, the committed step in the de novo pyrimidine nucleotide biosynthesis pathway. The chain is Aspartate carbamoyltransferase catalytic subunit from Bacillus cereus (strain ATCC 10987 / NRS 248).